A 520-amino-acid chain; its full sequence is Glucose-1-phosphate adenylyltransferase small subunit, chloroplastic (520 aa).

The transit peptide at 1–71 (MASVSAIGVL…RNPIIVSPKA (71 aa)) directs the protein to the chloroplast.

It belongs to the bacterial/plant glucose-1-phosphate adenylyltransferase family. Heterotetramer. In terms of tissue distribution, leaves.

It is found in the plastid. It localises to the chloroplast. It catalyses the reaction alpha-D-glucose 1-phosphate + ATP + H(+) = ADP-alpha-D-glucose + diphosphate. The protein operates within glycan biosynthesis; starch biosynthesis. Activated by 3'phosphoglycerate, inhibited by orthophosphate. Allosteric regulation. Functionally, this protein plays a role in synthesis of starch. It catalyzes the synthesis of the activated glycosyl donor, ADP-glucose from Glc-1-P and ATP. The polypeptide is Glucose-1-phosphate adenylyltransferase small subunit, chloroplastic (APS1) (Arabidopsis thaliana (Mouse-ear cress)).